Here is a 338-residue protein sequence, read N- to C-terminus: NADH-quinone oxidoreductase subunit H (338 aa).

8 helical membrane passes run 22 to 42 (VVQA…MSFI), 96 to 116 (VAMA…ALGV), 121 to 141 (IGLL…LFGG), 161 to 181 (ISYE…AGSF), 193 to 213 (VWFI…GVAV), 249 to 269 (YVNV…GWLA), 277 to 297 (FVPP…MFVL), and 315 to 335 (WKIC…VILM).

Belongs to the complex I subunit 1 family. In terms of assembly, NDH-1 is composed of 14 different subunits. Subunits NuoA, H, J, K, L, M, N constitute the membrane sector of the complex.

The protein resides in the cell inner membrane. The enzyme catalyses a quinone + NADH + 5 H(+)(in) = a quinol + NAD(+) + 4 H(+)(out). Its function is as follows. NDH-1 shuttles electrons from NADH, via FMN and iron-sulfur (Fe-S) centers, to quinones in the respiratory chain. The immediate electron acceptor for the enzyme in this species is believed to be ubiquinone. Couples the redox reaction to proton translocation (for every two electrons transferred, four hydrogen ions are translocated across the cytoplasmic membrane), and thus conserves the redox energy in a proton gradient. This subunit may bind ubiquinone. This Acinetobacter baumannii (strain ATCC 17978 / DSM 105126 / CIP 53.77 / LMG 1025 / NCDC KC755 / 5377) protein is NADH-quinone oxidoreductase subunit H.